Reading from the N-terminus, the 481-residue chain is Acyl-CoA ligase cnsG (481 aa).

Positions 3-11 match the PTS2-type peroxisomal targeting signal motif; sequence SPQLPPSMK. ATP is bound by residues 124 to 132, 263 to 268, Asp-353, and Arg-368; these read KSGTTGNPK and NGYGMT. Substrate is bound at residue Thr-268. CoA is bound by residues 376–378 and 446–448; these read GGL and AIF. Lys-466 serves as a coordination point for ATP.

Belongs to the ATP-dependent AMP-binding enzyme family.

The protein operates within alkaloid biosynthesis. Functionally, acyl-CoA ligase; part of the gene cluster that mediates the biosynthesis of communesins, a prominent class of indole alkaloids with great potential as pharmaceuticals. Communesins are biosynthesized by the coupling of tryptamine and aurantioclavine, two building blocks derived from L-tryptophan. The L-tryptophan decarboxylase cnsB converts L-tryptophan to tryptamine, whereas the tryptophan dimethylallyltransferase cnsF converts L-tryptophan to 4-dimethylallyl tryptophan which is further transformed to aurantioclavine by the aurantioclavine synthase cnsA, probably aided by the catalase cnsD. The cytochrome P450 monooxygenase cnsC catalyzes the heterodimeric coupling between the two different indole moieties, tryptamine and aurantioclavine, to construct vicinal quaternary stereocenters and yield the heptacyclic communesin scaffold. The O-methyltransferase cnsE then methylates the communesin scaffold to produce communesin K, the simplest characterized communesin that contains the heptacyclic core. The dioxygenase cnsJ converts communesin K into communesin I. Acylation to introduce the hexadienyl group at position N16 of communesin I by the acyltransferase cnsK leads to the production of communesin B. The hexadienyl group is produced by the highly reducing polyketide synthase cnsI, before being hydrolytically removed from cnsI by the serine hydrolase cnsH, converted into hexadienyl-CoA by the CoA ligase cnsG, and then transferred to communesin I by cnsK. Surprisingly, cnsK may also be a promiscuous acyltransferase that can tolerate a range of acyl groups, including acetyl-, propionyl-, and butyryl-CoA, which lead to communesins A, G and H respectively. The roles of the alpha-ketoglutarate-dependent dioxygenases cnsM and cnsP have still to be determined. The protein is Acyl-CoA ligase cnsG of Penicillium expansum (Blue mold rot fungus).